We begin with the raw amino-acid sequence, 335 residues long: Antigen-presenting glycoprotein CD1d (335 aa).

The N-terminal stretch at 1–19 is a signal peptide; the sequence is MGCLLFLLLWALLQAWGSA. Over 20–301 the chain is Extracellular; it reads EVPQRLFPLR…VLYWGGSYTS (282 aa). N-linked (GlcNAc...) asparagine glycans are attached at residues Asn38 and Asn60. Asp98 serves as a coordination point for a D-galactosylceramide. Intrachain disulfides connect Cys120-Cys184 and Cys224-Cys279. N-linked (GlcNAc...) asparagine glycosylation occurs at Asn126. 169 to 172 contacts a D-galactosylceramide; that stretch reads DKWT. Asn181 carries N-linked (GlcNAc...) asparagine glycosylation. Residues 185 to 292 enclose the Ig-like domain; that stretch reads PQFVSGLLES…HSSLEGQDIV (108 aa). The chain crosses the membrane as a helical span at residues 302-322; that stretch reads MGLIALAVLACLLFLLIVGFT. Residues 323–335 lie on the Cytoplasmic side of the membrane; sequence SRFKRQTSYQGVL. Positions 331-334 match the Internalization signal motif; that stretch reads YQGV.

As to quaternary structure, heterodimer with B2M (beta-2-microglobulin). Interacts with MHC II. In terms of tissue distribution, expressed on cortical thymocytes, on certain T-cell leukemias, and in various other tissues.

The protein resides in the cell membrane. Its subcellular location is the basolateral cell membrane. It localises to the endosome membrane. The protein localises to the lysosome membrane. It is found in the endoplasmic reticulum membrane. Functionally, antigen-presenting protein that binds self and non-self glycolipids and presents them to T-cell receptors on natural killer T-cells. This chain is Antigen-presenting glycoprotein CD1d (CD1D), found in Homo sapiens (Human).